The primary structure comprises 366 residues: Aminomethyltransferase (366 aa).

The protein belongs to the GcvT family. In terms of assembly, the glycine cleavage system is composed of four proteins: P, T, L and H.

The enzyme catalyses N(6)-[(R)-S(8)-aminomethyldihydrolipoyl]-L-lysyl-[protein] + (6S)-5,6,7,8-tetrahydrofolate = N(6)-[(R)-dihydrolipoyl]-L-lysyl-[protein] + (6R)-5,10-methylene-5,6,7,8-tetrahydrofolate + NH4(+). The glycine cleavage system catalyzes the degradation of glycine. The chain is Aminomethyltransferase from Thermosynechococcus vestitus (strain NIES-2133 / IAM M-273 / BP-1).